Consider the following 1189-residue polypeptide: Origin recognition complex subunit 1 (1189 aa).

The segment at 1–53 (MTPKKKIFQNFQANDNEILSPTKKGIKLNVSKLNILNFENTIITKEKTNYEYK) is required for peripherial nuclear localization. Thr2 carries the post-translational modification Phosphothreonine. Position 20 is a phosphoserine (Ser20). Leucine heptad repeat repeat units lie at residues 137–143 (LTNISSS), 144–150 (LTNISSS), 151–157 (LTNISSS), and 158–164 (LSNSLDE). Basic residues predominate over residues 239–248 (KKNISKKNTH). Disordered stretches follow at residues 239–421 (KKNI…DHTD) and 679–749 (DTQA…QSSL). The span at 254-279 (QNDKNKEKNKEKDKNIKKDRDKDIQT) shows a compositional bias: basic and acidic residues. Residues 304 to 320 (NNDNVKNNLKNNINNNN) are compositionally biased toward low complexity. A compositionally biased stretch (polar residues) spans 321-339 (TLKRSSQSVRIDSDLSSAH). Residues 353-381 (HRNNNNNNNNNNKTTSNNHNKNNKINNNN) are compositionally biased toward low complexity. The span at 385–394 (NYKKQTDTKH) shows a compositional bias: basic and acidic residues. Residues 395–411 (TNNTQNNKYNKTKTTNT) show a composition bias toward low complexity. The span at 695–709 (KAQTTTNVKANTHTK) shows a compositional bias: polar residues. Composition is skewed to basic and acidic residues over residues 710 to 724 (TLND…KNKE) and 733 to 742 (DVKKKSDPHN). ATP is bound by residues Val780 and 815-823 (GMPGTGKTA). Mg(2+) is bound by residues Asp903 and Glu904. Glu904 is an ATP binding site. Positions 913–922 (QKVLFTLFDW) match the PIP-box motif. Positions 937 and 1003 each coordinate ATP.

The protein belongs to the ORC1 family. As to quaternary structure, component of the origin recognition complex (ORC). Interacts (via PIP-box) with PCNA1; the interaction occurs during DNA replication in trophozoites. In terms of processing, in schizonts, may be phosphorylated by PK5; phosphorylation leads to ORC1 dissociation from the telomeres and var gene promoters, translocation to the cytoplasm, where it is degraded by the proteasome.

It localises to the nucleus. It is found in the chromosome. Its subcellular location is the telomere. The protein resides in the nucleolus. It carries out the reaction ATP + H2O = ADP + phosphate + H(+). In terms of biological role, component of the origin recognition complex (ORC) that binds origins of replication and thus may regulate the initiation of DNA replication. DNA-binding may not be ATP-dependent. In a SIR2A/Sir2-dependent manner, binds to and silences telomers and subtelomeric repeat regions (TAREs). In a SIR2A/Sir2-dependent manner, binds to promoters of var genes localized next to TAREs resulting in their silencing. This Plasmodium falciparum (isolate 3D7) protein is Origin recognition complex subunit 1.